Here is a 254-residue protein sequence, read N- to C-terminus: Imidazole glycerol phosphate synthase subunit HisF (254 aa).

Residues Asp12 and Asp131 contribute to the active site.

It belongs to the HisA/HisF family. As to quaternary structure, heterodimer of HisH and HisF.

The protein localises to the cytoplasm. It catalyses the reaction 5-[(5-phospho-1-deoxy-D-ribulos-1-ylimino)methylamino]-1-(5-phospho-beta-D-ribosyl)imidazole-4-carboxamide + L-glutamine = D-erythro-1-(imidazol-4-yl)glycerol 3-phosphate + 5-amino-1-(5-phospho-beta-D-ribosyl)imidazole-4-carboxamide + L-glutamate + H(+). Its pathway is amino-acid biosynthesis; L-histidine biosynthesis; L-histidine from 5-phospho-alpha-D-ribose 1-diphosphate: step 5/9. IGPS catalyzes the conversion of PRFAR and glutamine to IGP, AICAR and glutamate. The HisF subunit catalyzes the cyclization activity that produces IGP and AICAR from PRFAR using the ammonia provided by the HisH subunit. This Rhizorhabdus wittichii (strain DSM 6014 / CCUG 31198 / JCM 15750 / NBRC 105917 / EY 4224 / RW1) (Sphingomonas wittichii) protein is Imidazole glycerol phosphate synthase subunit HisF.